We begin with the raw amino-acid sequence, 346 residues long: uncharacterized protein (346 aa).

This sequence belongs to the IIV-6 359L family.

This is an uncharacterized protein from Invertebrate iridescent virus 6 (IIV-6).